The primary structure comprises 182 residues: MNVSKTEQDMRKAIEATAGNFATIRTGRASTSLLDRINVEYYGQPTPLKTLATITTPDASTVLIQPYDPSSLRLIEKTILESDLGLPPSNDGKTIRLNIPPLTAERRKDLVKVLRNLAEEGRVAVRNIRRHAIDEVRKEEKDAKVSEDEARRLQDEVQKLTDKSIQQIEKLFEAKEKEITTV.

It belongs to the RRF family.

The protein resides in the cytoplasm. Responsible for the release of ribosomes from messenger RNA at the termination of protein biosynthesis. May increase the efficiency of translation by recycling ribosomes from one round of translation to another. This chain is Ribosome-recycling factor, found in Gloeobacter violaceus (strain ATCC 29082 / PCC 7421).